We begin with the raw amino-acid sequence, 548 residues long: Pentatricopeptide repeat-containing protein At5g15300 (548 aa).

11 PPR repeats span residues 76 to 110 (DVSI…GVSP), 111 to 145 (DRYT…GFVL), 146 to 176 (NEYV…SAKA), 177 to 211 (HKVA…DQVA), 212 to 238 (WNVM…FTEK), 239 to 273 (DVVT…GEHP), 274 to 308 (DVVT…ASVS), 314 to 348 (GTPI…DLST), 349 to 378 (WNTL…KVWP), 379 to 409 (NEVT…MRDM), and 415 to 445 (NIKH…MKIE). A type E motif region spans residues 450–525 (VWRTLLGACK…PTGVSLIEED (76 aa)).

It belongs to the PPR family. PCMP-E subfamily.

The protein is Pentatricopeptide repeat-containing protein At5g15300 (PCMP-E40) of Arabidopsis thaliana (Mouse-ear cress).